Reading from the N-terminus, the 215-residue chain is Imidazole glycerol phosphate synthase subunit HisH (215 aa).

The region spanning 9 to 215 (EVVLVDYGLG…QNFVDYCLER (207 aa)) is the Glutamine amidotransferase type-1 domain. The Nucleophile role is filled by cysteine 85. Residues histidine 193 and glutamate 195 contribute to the active site.

As to quaternary structure, heterodimer of HisH and HisF.

It is found in the cytoplasm. The catalysed reaction is 5-[(5-phospho-1-deoxy-D-ribulos-1-ylimino)methylamino]-1-(5-phospho-beta-D-ribosyl)imidazole-4-carboxamide + L-glutamine = D-erythro-1-(imidazol-4-yl)glycerol 3-phosphate + 5-amino-1-(5-phospho-beta-D-ribosyl)imidazole-4-carboxamide + L-glutamate + H(+). It catalyses the reaction L-glutamine + H2O = L-glutamate + NH4(+). It participates in amino-acid biosynthesis; L-histidine biosynthesis; L-histidine from 5-phospho-alpha-D-ribose 1-diphosphate: step 5/9. IGPS catalyzes the conversion of PRFAR and glutamine to IGP, AICAR and glutamate. The HisH subunit catalyzes the hydrolysis of glutamine to glutamate and ammonia as part of the synthesis of IGP and AICAR. The resulting ammonia molecule is channeled to the active site of HisF. In Natronomonas pharaonis (strain ATCC 35678 / DSM 2160 / CIP 103997 / JCM 8858 / NBRC 14720 / NCIMB 2260 / Gabara) (Halobacterium pharaonis), this protein is Imidazole glycerol phosphate synthase subunit HisH.